The sequence spans 264 residues: 3-methyl-2-oxobutanoate hydroxymethyltransferase (264 aa).

Positions 45 and 84 each coordinate Mg(2+). 3-methyl-2-oxobutanoate is bound by residues 45-46, aspartate 84, and lysine 112; that span reads DS. Glutamate 114 is a binding site for Mg(2+). Glutamate 181 serves as the catalytic Proton acceptor.

Belongs to the PanB family. Homodecamer; pentamer of dimers. Requires Mg(2+) as cofactor.

Its subcellular location is the cytoplasm. It catalyses the reaction 3-methyl-2-oxobutanoate + (6R)-5,10-methylene-5,6,7,8-tetrahydrofolate + H2O = 2-dehydropantoate + (6S)-5,6,7,8-tetrahydrofolate. It functions in the pathway cofactor biosynthesis; (R)-pantothenate biosynthesis; (R)-pantoate from 3-methyl-2-oxobutanoate: step 1/2. Its function is as follows. Catalyzes the reversible reaction in which hydroxymethyl group from 5,10-methylenetetrahydrofolate is transferred onto alpha-ketoisovalerate to form ketopantoate. This chain is 3-methyl-2-oxobutanoate hydroxymethyltransferase, found in Escherichia coli (strain 55989 / EAEC).